The chain runs to 428 residues: MRQPASEGLAAEMRRLAEASSDASRALSRAQPRAKDEALRAAADAIGRRAKEILAASAEDVAAARAAGQSAAYLDRLALDPKRLDGIAAALREVAALPDPVGEVTATWRRPNGLSVKKVRIPLGVVLMVYEARPNVTVDAAALCVKSGNAAILRPGSDALRSSLALAAAFAEGLAAAGLPAASAQVVPTSDREATFELLQLDDLIDLAIPRGGPSLIRAVAERSRVPVVKHYQGVCHLFLDQSAPLQQAIDLALNGKVQRPAVCNALECLLVHREAAGRLLPAVGRALVDAGVELRSCPTSTTILARAGVPAVTAAPDDYGKEFSDLILAVRVVHDLDGALDHIARYGSLHTEAILTRDLASARRFEREVTASAVMVNASTRFNDGGELGLGAEIGISTTKLHAFGPMGLAELTTQKFVVEGDGQVRS.

The protein belongs to the gamma-glutamyl phosphate reductase family.

It localises to the cytoplasm. The enzyme catalyses L-glutamate 5-semialdehyde + phosphate + NADP(+) = L-glutamyl 5-phosphate + NADPH + H(+). It functions in the pathway amino-acid biosynthesis; L-proline biosynthesis; L-glutamate 5-semialdehyde from L-glutamate: step 2/2. Catalyzes the NADPH-dependent reduction of L-glutamate 5-phosphate into L-glutamate 5-semialdehyde and phosphate. The product spontaneously undergoes cyclization to form 1-pyrroline-5-carboxylate. The protein is Gamma-glutamyl phosphate reductase of Anaeromyxobacter sp. (strain Fw109-5).